A 117-amino-acid polypeptide reads, in one-letter code: Large ribosomal subunit protein eL34 (117 aa).

This sequence belongs to the eukaryotic ribosomal protein eL34 family. In terms of assembly, component of the large ribosomal subunit.

The protein localises to the cytoplasm. The protein resides in the cytosol. It is found in the endoplasmic reticulum. Its function is as follows. Component of the large ribosomal subunit. The ribosome is a large ribonucleoprotein complex responsible for the synthesis of proteins in the cell. In Danio rerio (Zebrafish), this protein is Large ribosomal subunit protein eL34 (rpl34).